The chain runs to 205 residues: Bacterial microcompartment protein trimer-1 (205 aa).

The tract at residues 1 to 20 (MDHAPERFDATPPAGEPDRP) is disordered. BMC domains follow at residues 21 to 106 (ALGV…RFLD) and 120 to 204 (SVII…GRLF).

This sequence belongs to the bacterial microcompartments protein family. In terms of assembly, homotrimerizes to form a pseudohexamer. Unlike its paralogs BMC-T2 and BMC-T3, the pseudohexamers do not stack. The concave side faces outward, with the N- and C-terminii exposed to the cytoplasm.

It localises to the bacterial microcompartment. Its function is as follows. A minor component of the bacterial microcompartment (BMC) shell. Expression of 5 proteins in E.coli (BMC-H (Hoch_5815), BMC-P (Hoch_5814), and 3 BMC-T (Hoch_5812, Hoch_5816, Hoch_3341)) forms 40 nm artificial BMCs with a molecular mass of 6.5 MDa. This protein does not form stacked pseudohexamers in the BMC. There are 20 BMC-T pseudohexamers per BMC, composed of mixed BMC-T1, BMC-T2 and BMC-T3. The shell facets are 20-30 Angstroms thick, with 1 of BMC-T trimers protruding to the exterior. The sequence is that of Bacterial microcompartment protein trimer-1 from Haliangium ochraceum (strain DSM 14365 / JCM 11303 / SMP-2).